Consider the following 159-residue polypeptide: NADH-quinone oxidoreductase subunit B (159 aa).

Residues Cys-32, Cys-33, Cys-97, and Cys-126 each contribute to the [4Fe-4S] cluster site.

It belongs to the complex I 20 kDa subunit family. In terms of assembly, NDH-1 is composed of 14 different subunits. Subunits NuoB, C, D, E, F, and G constitute the peripheral sector of the complex. [4Fe-4S] cluster serves as cofactor.

The protein localises to the cell inner membrane. The enzyme catalyses a quinone + NADH + 5 H(+)(in) = a quinol + NAD(+) + 4 H(+)(out). Functionally, NDH-1 shuttles electrons from NADH, via FMN and iron-sulfur (Fe-S) centers, to quinones in the respiratory chain. The immediate electron acceptor for the enzyme in this species is believed to be ubiquinone. Couples the redox reaction to proton translocation (for every two electrons transferred, four hydrogen ions are translocated across the cytoplasmic membrane), and thus conserves the redox energy in a proton gradient. The sequence is that of NADH-quinone oxidoreductase subunit B from Helicobacter pylori (strain P12).